Consider the following 246-residue polypeptide: tRNA (guanine-N(7)-)-methyltransferase (246 aa).

Residues Glu77, Glu102, Asp129, and Asp152 each coordinate S-adenosyl-L-methionine. Asp152 is a catalytic residue. Substrate is bound by residues Lys156, Asp188, and 225–228 (TKFE).

Belongs to the class I-like SAM-binding methyltransferase superfamily. TrmB family.

The enzyme catalyses guanosine(46) in tRNA + S-adenosyl-L-methionine = N(7)-methylguanosine(46) in tRNA + S-adenosyl-L-homocysteine. The protein operates within tRNA modification; N(7)-methylguanine-tRNA biosynthesis. Functionally, catalyzes the formation of N(7)-methylguanine at position 46 (m7G46) in tRNA. The chain is tRNA (guanine-N(7)-)-methyltransferase from Haemophilus influenzae (strain PittGG).